The sequence spans 1026 residues: mRNA transport homolog 4 (1026 aa).

Residues 134 to 290 (ILCIDNNQSV…WVASIKQQPV (157 aa)) form the Helicase ATP-binding domain. 147–154 (AHTSAGKT) contacts ATP. The DEIH box motif lies at 238–241 (DEIH). Positions 360–564 (NVLKIIRSVA…NMVLNLMRVE (205 aa)) constitute a Helicase C-terminal domain.

The protein belongs to the helicase family. SKI2 subfamily.

It is found in the nucleus. This chain is mRNA transport homolog 4 (mtr-4), found in Caenorhabditis elegans.